Consider the following 66-residue polypeptide: MENEIITVACPTCGSAVIWGEQSPYRPFCSKRCQLIDLGEWANEEKRIASDATHSDSEEWSEVDDR.

Positions 10, 13, 29, and 33 each coordinate Zn(2+).

The protein belongs to the DNA gyrase inhibitor YacG family. As to quaternary structure, interacts with GyrB. It depends on Zn(2+) as a cofactor.

Its function is as follows. Inhibits all the catalytic activities of DNA gyrase by preventing its interaction with DNA. Acts by binding directly to the C-terminal domain of GyrB, which probably disrupts DNA binding by the gyrase. The sequence is that of DNA gyrase inhibitor YacG from Edwardsiella ictaluri (strain 93-146).